A 349-amino-acid chain; its full sequence is Phosphoribosylformylglycinamidine cyclo-ligase (349 aa).

This sequence belongs to the AIR synthase family.

The protein localises to the cytoplasm. The catalysed reaction is 2-formamido-N(1)-(5-O-phospho-beta-D-ribosyl)acetamidine + ATP = 5-amino-1-(5-phospho-beta-D-ribosyl)imidazole + ADP + phosphate + H(+). It functions in the pathway purine metabolism; IMP biosynthesis via de novo pathway; 5-amino-1-(5-phospho-D-ribosyl)imidazole from N(2)-formyl-N(1)-(5-phospho-D-ribosyl)glycinamide: step 2/2. The chain is Phosphoribosylformylglycinamidine cyclo-ligase from Psychrobacter arcticus (strain DSM 17307 / VKM B-2377 / 273-4).